We begin with the raw amino-acid sequence, 238 residues long: tRNA (guanine-N(7)-)-methyltransferase (238 aa).

Residues Glu68, Glu93, Asp120, and Asp143 each coordinate S-adenosyl-L-methionine. Asp143 is an active-site residue. Residues Lys147, Asp179, and 216–219 (TKFE) each bind substrate.

The protein belongs to the class I-like SAM-binding methyltransferase superfamily. TrmB family. Monomer.

It catalyses the reaction guanosine(46) in tRNA + S-adenosyl-L-methionine = N(7)-methylguanosine(46) in tRNA + S-adenosyl-L-homocysteine. It participates in tRNA modification; N(7)-methylguanine-tRNA biosynthesis. In terms of biological role, catalyzes the formation of N(7)-methylguanine at position 46 (m7G46) in tRNA. The protein is tRNA (guanine-N(7)-)-methyltransferase of Edwardsiella ictaluri (strain 93-146).